We begin with the raw amino-acid sequence, 240 residues long: tRNA1(Val) (adenine(37)-N6)-methyltransferase (240 aa).

This sequence belongs to the methyltransferase superfamily. tRNA (adenine-N(6)-)-methyltransferase family.

The protein localises to the cytoplasm. The enzyme catalyses adenosine(37) in tRNA1(Val) + S-adenosyl-L-methionine = N(6)-methyladenosine(37) in tRNA1(Val) + S-adenosyl-L-homocysteine + H(+). Specifically methylates the adenine in position 37 of tRNA(1)(Val) (anticodon cmo5UAC). The chain is tRNA1(Val) (adenine(37)-N6)-methyltransferase from Christiangramia forsetii (strain DSM 17595 / CGMCC 1.15422 / KT0803) (Gramella forsetii).